The sequence spans 339 residues: GTPase Obg (339 aa).

The 159-residue stretch at methionine 1–leucine 159 folds into the Obg domain. The OBG-type G domain maps to alanine 160–glutamate 333. GTP is bound by residues glycine 166–serine 173, phenylalanine 191–tyrosine 195, aspartate 213–glycine 216, asparagine 283–aspartate 286, and serine 314–isoleucine 316. Positions 173 and 193 each coordinate Mg(2+).

The protein belongs to the TRAFAC class OBG-HflX-like GTPase superfamily. OBG GTPase family. Monomer. Mg(2+) is required as a cofactor.

It is found in the cytoplasm. In terms of biological role, an essential GTPase which binds GTP, GDP and possibly (p)ppGpp with moderate affinity, with high nucleotide exchange rates and a fairly low GTP hydrolysis rate. Plays a role in control of the cell cycle, stress response, ribosome biogenesis and in those bacteria that undergo differentiation, in morphogenesis control. This is GTPase Obg from Coxiella burnetii (strain RSA 331 / Henzerling II).